We begin with the raw amino-acid sequence, 1360 residues long: DNA-directed RNA polymerase subunit beta (1360 aa).

It belongs to the RNA polymerase beta chain family. In terms of assembly, the RNAP catalytic core consists of 2 alpha, 1 beta, 1 beta' and 1 omega subunit. When a sigma factor is associated with the core the holoenzyme is formed, which can initiate transcription.

It catalyses the reaction RNA(n) + a ribonucleoside 5'-triphosphate = RNA(n+1) + diphosphate. Functionally, DNA-dependent RNA polymerase catalyzes the transcription of DNA into RNA using the four ribonucleoside triphosphates as substrates. This is DNA-directed RNA polymerase subunit beta from Vesicomyosocius okutanii subsp. Calyptogena okutanii (strain HA).